The sequence spans 324 residues: AT-hook motif nuclear-localized protein 24 (324 aa).

A compositionally biased stretch (polar residues) spans 1–12; it reads MDPVQSHGSQSS. 2 disordered regions span residues 1-122 and 262-324; these read MDPV…KPPI and MQTP…RPPY. The span at 24-33 shows a compositional bias: low complexity; sequence LHLQQQQQEF. Residues 69–79 are compositionally biased toward polar residues; sequence NIDNIANNSGS. Over residues 88–99 the composition is skewed to gly residues; sequence GGSGEGGGGSGG. A DNA-binding region (a.T hook) is located at residues 105-117; that stretch reads RRPRGRPAGSKNK. Residues 129–268 form the PPC domain; that stretch reads ANALRTHVME…EDEMQTPVHG (140 aa). Positions 280–297 are enriched in low complexity; the sequence is MMGQQLQHQQQAMSGHQG. A compositionally biased stretch (polar residues) spans 304 to 318; the sequence is GSVQLQQQHDQSYWS.

The protein localises to the nucleus. Functionally, transcription factor that specifically binds AT-rich DNA sequences related to the nuclear matrix attachment regions (MARs). This is AT-hook motif nuclear-localized protein 24 from Arabidopsis thaliana (Mouse-ear cress).